The chain runs to 394 residues: Phosphoglycerate kinase (394 aa).

Substrate contacts are provided by residues 21-23, 59-62, arginine 117, and arginine 150; these read DLN and HLGR. Residues lysine 201, glutamate 318, and 344-347 contribute to the ATP site; that span reads GGDT.

This sequence belongs to the phosphoglycerate kinase family. Monomer.

The protein localises to the cytoplasm. The catalysed reaction is (2R)-3-phosphoglycerate + ATP = (2R)-3-phospho-glyceroyl phosphate + ADP. It functions in the pathway carbohydrate degradation; glycolysis; pyruvate from D-glyceraldehyde 3-phosphate: step 2/5. The protein is Phosphoglycerate kinase of Blochmanniella pennsylvanica (strain BPEN).